The primary structure comprises 450 residues: Tubulin alpha-4 chain (450 aa).

A GTP-binding site is contributed by Gln-11. The residue at position 40 (Lys-40) is an N6-acetyllysine. Glu-71, Gly-144, Thr-145, Thr-179, Asn-206, and Asn-228 together coordinate GTP. Glu-71 is a Mg(2+) binding site. Glu-254 is a catalytic residue. The tract at residues 431–450 (DYEEVGAESGEGDEGDEEEY) is disordered.

Belongs to the tubulin family. As to quaternary structure, dimer of alpha and beta chains. A typical microtubule is a hollow water-filled tube with an outer diameter of 25 nm and an inner diameter of 15 nM. Alpha-beta heterodimers associate head-to-tail to form protofilaments running lengthwise along the microtubule wall with the beta-tubulin subunit facing the microtubule plus end conferring a structural polarity. Microtubules usually have 13 protofilaments but different protofilament numbers can be found in some organisms and specialized cells. The cofactor is Mg(2+). Undergoes a tyrosination/detyrosination cycle, the cyclic removal and re-addition of a C-terminal tyrosine residue by the enzymes tubulin tyrosine carboxypeptidase (TTCP) and tubulin tyrosine ligase (TTL), respectively. In terms of processing, acetylation of alpha chains at Lys-40 stabilizes microtubules and affects affinity and processivity of microtubule motors. This modification has a role in multiple cellular functions, ranging from cell motility, cell cycle progression or cell differentiation to intracellular trafficking and signaling.

The protein resides in the cytoplasm. The protein localises to the cytoskeleton. The catalysed reaction is GTP + H2O = GDP + phosphate + H(+). Functionally, tubulin is the major constituent of microtubules, a cylinder consisting of laterally associated linear protofilaments composed of alpha- and beta-tubulin heterodimers. Microtubules grow by the addition of GTP-tubulin dimers to the microtubule end, where a stabilizing cap forms. Below the cap, tubulin dimers are in GDP-bound state, owing to GTPase activity of alpha-tubulin. The chain is Tubulin alpha-4 chain from Gossypium hirsutum (Upland cotton).